The primary structure comprises 804 residues: MPTGDPSSRTPPSPDADSVPILPLRNSVLFPMSVVPINVGRPRSVRLVEDLLGRERALVGVISQRSPDVDEPTFKELYSVGTVARVVKVIRLGPNNYSVVLNGLGRFRVKSAFSLEPYMRARIERIPESLVRDVELEALGAGLREATREVLGLMPNLPRDTAGILDNVREPGALADLIASNFPQAQASVGDKQEILEAFDVKARVRLVLAMVGRQLEVLRVKKEISSMVQEEMGKSQREYILRQQMKSIKEELGEGGDDDEIEELRERIRRAKVPAEVDKVVRKQLSRLRSMAQQSAEFNVTKTYLEWIADLPWSKTTVDKLSVESVRRCLDEDHLGLEKVKKRIVEYSAIRQLRTDKKGPILLFIGPPGVGKTSLGKSIARSMGRRYERIALGGVRDEAEIRGHRRTYVGALPGRILQALKKAGTKNPVLVLDEVDKMGVDLRGDPAAALLEVLDPEQNSTFQDHYLDLPFDLSQVMFLATANNWDGIPGPLVDRMEVIEVPGYTRTDKLGIAREFLVPKQLSAHGLTDERLEFTEPGIEAVVDHYTREAGVRGLERQIAAVCRATAVKVAEGNDVREVATPEHVEQVLGPHKHRPEIAERTLQPGVATGLAWTPAGGEILFIEATKMPGKGNVVLTGNMRNVMQESASTAVSFVRSKADRLHLDPEWLKEIDLHVHIPQHGTPKDGPSAGVTMFAAVASLLLGAPVRSDVAMTGEISLRGRVMPVGGVKEKLLAAHRAGIRHVLIPAKNRRDLEDVPQDVKDQIKITMVSSMEEILPLVLEPPRRAPAQSASPEELEEQAGV.

The Lon N-terminal domain maps to 19 to 216 (VPILPLRNSV…LVLAMVGRQL (198 aa)). 367–374 (GPPGVGKT) provides a ligand contact to ATP. Positions 603-784 (TLQPGVATGL…EEILPLVLEP (182 aa)) constitute a Lon proteolytic domain. Catalysis depends on residues Ser-690 and Lys-733. The interval 782–804 (LEPPRRAPAQSASPEELEEQAGV) is disordered.

The protein belongs to the peptidase S16 family. Homohexamer. Organized in a ring with a central cavity.

It is found in the cytoplasm. It catalyses the reaction Hydrolysis of proteins in presence of ATP.. ATP-dependent serine protease that mediates the selective degradation of mutant and abnormal proteins as well as certain short-lived regulatory proteins. Required for cellular homeostasis and for survival from DNA damage and developmental changes induced by stress. Degrades polypeptides processively to yield small peptide fragments that are 5 to 10 amino acids long. Binds to DNA in a double-stranded, site-specific manner. This is Lon protease 2 from Sorangium cellulosum (strain So ce56) (Polyangium cellulosum (strain So ce56)).